A 170-amino-acid polypeptide reads, in one-letter code: Small ribosomal subunit protein uS5 (170 aa).

The region spanning 13 to 76 is the S5 DRBM domain; sequence LLEKLVGVRR…ENARKNMISV (64 aa).

Belongs to the universal ribosomal protein uS5 family. As to quaternary structure, part of the 30S ribosomal subunit. Contacts proteins S4 and S8.

Its function is as follows. With S4 and S12 plays an important role in translational accuracy. In terms of biological role, located at the back of the 30S subunit body where it stabilizes the conformation of the head with respect to the body. The protein is Small ribosomal subunit protein uS5 of Nitrosococcus oceani (strain ATCC 19707 / BCRC 17464 / JCM 30415 / NCIMB 11848 / C-107).